We begin with the raw amino-acid sequence, 500 residues long: Matrilin-1 (500 aa).

The N-terminal stretch at 1-29 is a signal peptide; the sequence is MKVTSGPAFALCSLLLLLLLLLQVPDSLS. In terms of domain architecture, VWFA 1 spans 30 to 226; that stretch reads LVPQPRGHLC…AKKFQEAFCV (197 aa). Asn-80 carries an N-linked (GlcNAc...) asparagine glycan. In terms of domain architecture, EGF-like spans 227 to 267; the sequence is VSDLCATGDHDCEQLCVSSPGSYTCACHEGFTLNSDGKTCN. Cystine bridges form between Cys-231/Cys-242, Cys-238/Cys-251, and Cys-253/Cys-266. The 190-residue stretch at 268–457 folds into the VWFA 2 domain; that stretch reads VCRGGGSGSA…GKKLQKQICV (190 aa). Residue Asn-348 is glycosylated (N-linked (GlcNAc...) asparagine). Residues 471–499 are a coiled coil; it reads EAKVEGLLQALTRKLEAVSGRLAVLENRI.

As to quaternary structure, homotrimer. Part of a complex composed of MATN1 (via VWFA1 domain), type 2 collagens and type 6 collagens. Forms a complex (via covalent bonds) with ACAN; the interaction increases in abundance with increasing age of the organism via an increase in occupancy of MATN1 binding sites. Interacts with COMP. N-glycosylated; reduces binding affinity for type 2 collagens. As to expression, expressed in femoral head articular cartilage. Expressed in the trachea and extraskeletal tissue around the eye.

Its subcellular location is the secreted. The protein localises to the extracellular space. The protein resides in the extracellular matrix. In terms of biological role, a major component of the extracellular matrix of non-articular cartilage. Binds to type 2 collagens and forms long concatenated protein networks as part of the extracellular matrix. Required for the network-like organization and bundling of collagen fibrils surrounding chondrocytes in the zones of maturation and hypertrophy. Required for mechanotransduction and adaption to mechanical loading in cartilage chondrocytes, resulting in an increase in expression of the extracellular matrix components ACAN and COL2A1. Acts as a moderator of angiogenesis in response to injury. This Mus musculus (Mouse) protein is Matrilin-1.